Consider the following 885-residue polypeptide: Alanine--tRNA ligase (885 aa).

The Zn(2+) site is built by histidine 564, histidine 568, cysteine 676, and histidine 680.

It belongs to the class-II aminoacyl-tRNA synthetase family. Zn(2+) is required as a cofactor.

Its subcellular location is the cytoplasm. The enzyme catalyses tRNA(Ala) + L-alanine + ATP = L-alanyl-tRNA(Ala) + AMP + diphosphate. Catalyzes the attachment of alanine to tRNA(Ala) in a two-step reaction: alanine is first activated by ATP to form Ala-AMP and then transferred to the acceptor end of tRNA(Ala). Also edits incorrectly charged Ser-tRNA(Ala) and Gly-tRNA(Ala) via its editing domain. In Brucella ovis (strain ATCC 25840 / 63/290 / NCTC 10512), this protein is Alanine--tRNA ligase.